Consider the following 431-residue polypeptide: Enolase (431 aa).

Gln166 is a binding site for (2R)-2-phosphoglycerate. The active-site Proton donor is Glu208. The Mg(2+) site is built by Asp245, Glu288, and Asp315. 4 residues coordinate (2R)-2-phosphoglycerate: Lys340, Arg369, Ser370, and Lys391. Lys340 serves as the catalytic Proton acceptor.

It belongs to the enolase family. The cofactor is Mg(2+).

It is found in the cytoplasm. The protein resides in the secreted. Its subcellular location is the cell surface. The enzyme catalyses (2R)-2-phosphoglycerate = phosphoenolpyruvate + H2O. It functions in the pathway carbohydrate degradation; glycolysis; pyruvate from D-glyceraldehyde 3-phosphate: step 4/5. Functionally, catalyzes the reversible conversion of 2-phosphoglycerate (2-PG) into phosphoenolpyruvate (PEP). It is essential for the degradation of carbohydrates via glycolysis. This chain is Enolase, found in Clostridium perfringens (strain ATCC 13124 / DSM 756 / JCM 1290 / NCIMB 6125 / NCTC 8237 / Type A).